A 251-amino-acid polypeptide reads, in one-letter code: Probable transcriptional regulatory protein Pmob_0807 (251 aa).

A disordered region spans residues 1-22; the sequence is MSGHNKWANIKHRKGAQDAKRS.

The protein belongs to the TACO1 family.

It localises to the cytoplasm. The polypeptide is Probable transcriptional regulatory protein Pmob_0807 (Petrotoga mobilis (strain DSM 10674 / SJ95)).